A 539-amino-acid chain; its full sequence is Eukaryotic translation initiation factor 3 subunit L (539 aa).

The PCI domain occupies threonine 306 to histidine 514.

This sequence belongs to the eIF-3 subunit L family. Component of the eukaryotic translation initiation factor 3 (eIF-3) complex. The eIF-3 complex interacts with pix.

It is found in the cytoplasm. Component of the eukaryotic translation initiation factor 3 (eIF-3) complex, which is involved in protein synthesis of a specialized repertoire of mRNAs and, together with other initiation factors, stimulates binding of mRNA and methionyl-tRNAi to the 40S ribosome. The eIF-3 complex specifically targets and initiates translation of a subset of mRNAs involved in cell proliferation. The polypeptide is Eukaryotic translation initiation factor 3 subunit L (Drosophila ananassae (Fruit fly)).